The chain runs to 573 residues: Proline--tRNA ligase (573 aa).

This sequence belongs to the class-II aminoacyl-tRNA synthetase family. ProS type 1 subfamily. In terms of assembly, homodimer.

Its subcellular location is the cytoplasm. The catalysed reaction is tRNA(Pro) + L-proline + ATP = L-prolyl-tRNA(Pro) + AMP + diphosphate. In terms of biological role, catalyzes the attachment of proline to tRNA(Pro) in a two-step reaction: proline is first activated by ATP to form Pro-AMP and then transferred to the acceptor end of tRNA(Pro). As ProRS can inadvertently accommodate and process non-cognate amino acids such as alanine and cysteine, to avoid such errors it has two additional distinct editing activities against alanine. One activity is designated as 'pretransfer' editing and involves the tRNA(Pro)-independent hydrolysis of activated Ala-AMP. The other activity is designated 'posttransfer' editing and involves deacylation of mischarged Ala-tRNA(Pro). The misacylated Cys-tRNA(Pro) is not edited by ProRS. In Cupriavidus necator (strain ATCC 17699 / DSM 428 / KCTC 22496 / NCIMB 10442 / H16 / Stanier 337) (Ralstonia eutropha), this protein is Proline--tRNA ligase.